We begin with the raw amino-acid sequence, 641 residues long: Epithelial sodium channel subunit beta (641 aa).

Topologically, residues 1–50 (MHLKKYLLKGLHRLQKGPGYSYKELLVWYCNNTNTHGPKRIICEGPKKKA) are cytoplasmic. The helical transmembrane segment at 51-71 (MWFLITLLFTSLVCWQWGVFI) threads the bilayer. The Extracellular portion of the chain corresponds to 72–533 (RTYLSWEVSV…GGQFGFWMGG (462 aa)). 9 cysteine pairs are disulfide-bonded: Cys98–Cys273, Cys185–Cys190, Cys197–Cys204, Cys250–Cys257, Cys362–Cys449, Cys387–Cys445, Cys391–Cys441, Cys400–Cys427, and Cys402–Cys416. Asn141 carries N-linked (GlcNAc...) asparagine glycosylation. A glycan (N-linked (GlcNAc...) asparagine) is linked at Asn261. A helical transmembrane segment spans residues 534–554 (SVLCLIEFGEILIDFVWITII). Residues 555–641 (KLVAFAKSLR…IESDSEGDAI (87 aa)) lie on the Cytoplasmic side of the membrane. A disordered region spans residues 593–624 (PDVARPGPDPGTYPDEQTLPIPGTPPPNYDSL). The PY motif; recruits WW domain-containing proteins and is thereby required for ubiquitination and inhibition of the channel by NEDD4 and NEDD4L motif lies at 617–621 (PPPNY). A phosphoserine mark is found at Ser634 and Ser636.

The protein belongs to the amiloride-sensitive sodium channel (TC 1.A.6) family. SCNN1B subfamily. Component of the heterotrimeric epithelial sodium channel (ENaC) composed of an alpha/SCNN1A, a beta/SCNN1B and a gamma/SCNN1G subunit. An additional delta/SCNN1D subunit can replace the alpha/SCNN1A subunit to form an alternative channel with specific properties. Interacts with WWP1 (via WW domains). Interacts with WWP2 (via WW domains); inhibits the channel. Interacts with the full-length immature form of PCSK9 (pro-PCSK9). Interacts (N-glycosylated) with BPIFA1; the interaction is direct and inhibits the proteolytic processing of SCNN1A and SCNN1G and the activation of ENaC. In terms of processing, ubiquitinated. Can be ubiquitinated at multiple sites and undergo monoubiquitination and polyubiquitination. Ubiquitination by NEDD4 or NEDD4L inhibits the ENaC channel through endocytosis, intracellular retention and degradation of its individual subunits. However, some studies could not confirm the ubiquitination of this subunit of the ENaC. Phosphorylated on serine and threonine residues. Aldosterone and insulin increase the basal level of phosphorylation. Post-translationally, N-glycosylated. N-glycosylation is required for interaction with BPIFA1.

Its subcellular location is the apical cell membrane. The protein localises to the cytoplasmic vesicle membrane. The enzyme catalyses Na(+)(in) = Na(+)(out). Originally identified and characterized by its inhibition by the diuretic drug amiloride. Functionally, this is one of the three pore-forming subunits of the heterotrimeric epithelial sodium channel (ENaC), a critical regulator of sodium balance and fluid homeostasis. ENaC operates in epithelial tissues, where it mediates the electrodiffusion of sodium ions from extracellular fluid through the apical membrane of cells, with water following osmotically. It plays a key role in maintaining sodium homeostasis through electrogenic sodium reabsorption in the kidneys. Additionally, ENaC is essential for airway surface liquid homeostasis, which is crucial for proper mucus clearance. This is Epithelial sodium channel subunit beta from Canis lupus familiaris (Dog).